The chain runs to 166 residues: Interferon gamma (166 aa).

An N-terminal signal peptide occupies residues 1–23 (MKYTSYILAFQLCIILGSSSCYS). Gln24 carries the pyrrolidone carboxylic acid modification. N-linked (GlcNAc...) asparagine glycosylation is found at Asn39, Asn44, and Asn106.

Belongs to the type II (or gamma) interferon family. Homodimer. In terms of tissue distribution, released primarily from activated T lymphocytes.

The protein localises to the secreted. Produced by lymphocytes activated by specific antigens or mitogens. IFN-gamma, in addition to having antiviral activity, has important immunoregulatory functions. It is a potent activator of macrophages, it has antiproliferative effects on transformed cells and it can potentiate the antiviral and antitumor effects of the type I interferons. The protein is Interferon gamma (IFNG) of Marmota monax (Woodchuck).